The chain runs to 354 residues: Probable L-ascorbate-6-phosphate lactonase UlaG (354 aa).

This sequence belongs to the UlaG family. Requires a divalent metal cation as cofactor.

The protein resides in the cytoplasm. The catalysed reaction is L-ascorbate 6-phosphate + H2O = 3-dehydro-L-gulonate 6-phosphate. It participates in cofactor degradation; L-ascorbate degradation; D-xylulose 5-phosphate from L-ascorbate: step 1/4. Its function is as follows. Probably catalyzes the hydrolysis of L-ascorbate-6-P into 3-keto-L-gulonate-6-P. Is essential for L-ascorbate utilization under anaerobic conditions. The chain is Probable L-ascorbate-6-phosphate lactonase UlaG from Shigella dysenteriae serotype 1 (strain Sd197).